The chain runs to 99 residues: Putative septation protein SpoVG (99 aa).

Belongs to the SpoVG family.

Its function is as follows. Could be involved in septation. The chain is Putative septation protein SpoVG from Onion yellows phytoplasma (strain OY-M).